Reading from the N-terminus, the 743-residue chain is MTIPNTIPITPELIAGHGLKPDEYQRILDLIGREPTFTELGIFSAMWNEHCSYKSSKKWLRTLPTKGPRVIQGPGENAGVVDIDDGDCVVFKMESHNHPSYIEPYQGAATGVGGILRDVFTMGARPIAAMNALRFGEPDHPKTRHLVSGVVSGVGGYGNSFGVPTVGGEVEFDARYNGNILVNAFAAGIAKSNAIFLSEAKGVGLPVVYLGAKTGRDGVGGATMASAEFDESIEEKRPTVQVGDPFTEKCLLEACLELMQTGAVIAIQDMGAAGLTCSAVEMGAKGDLGILLELDKVPVREERMTAYEMMLSESQERMLMVLQPEKEQEAKAIFVKWGLDFAIVGKTTDDLRFRVMHQGEEVANLPIKDLGDQAPEYDRPWRESGKQAPLPANLVAAPKDYGQALLQLVGSANQSSRRWVYEQYDTLIQGNSLQLPGGDAGVVRVDGHPSKALAFSSDVTPRYVEADPFEGGKQAVAECWRNITATGAEPLAATDNLNFGNPEKPEIMGQFVQAVKGIGEACRALDFPIVSGNVSLYNETNGVAILPTPTIAGVGLLPDWRKMARIGSANDGDKVIMIGVDGSHLGQSVYLRDVLDSREGPAPEVDLFAERRNGDFVRSVIRNGQATACHDISSGGLAVALAEMVMASDKGLAIDLGEGKGAPHALLFGEDQARYVLTVPADVADFLCANAEGAGVPFRRLGTVGGTALTVGDLISLPIQQLRDAHESWFPDFMEGRGELAAE.

Residue His-50 is part of the active site. Tyr-53 and Lys-92 together coordinate ATP. Glu-94 lines the Mg(2+) pocket. Residues 95 to 98 and Arg-117 each bind substrate; that span reads SHNH. The active-site Proton acceptor is His-96. A Mg(2+)-binding site is contributed by Asp-118. A substrate-binding site is contributed by Gln-241. A Mg(2+)-binding site is contributed by Asp-269. 313–315 contributes to the substrate binding site; that stretch reads ESQ. ATP-binding residues include Asp-495 and Gly-532. Asn-533 contributes to the Mg(2+) binding site. Residue Ser-535 coordinates substrate.

The protein belongs to the FGAMS family. Monomer. Part of the FGAM synthase complex composed of 1 PurL, 1 PurQ and 2 PurS subunits.

It localises to the cytoplasm. The catalysed reaction is N(2)-formyl-N(1)-(5-phospho-beta-D-ribosyl)glycinamide + L-glutamine + ATP + H2O = 2-formamido-N(1)-(5-O-phospho-beta-D-ribosyl)acetamidine + L-glutamate + ADP + phosphate + H(+). Its pathway is purine metabolism; IMP biosynthesis via de novo pathway; 5-amino-1-(5-phospho-D-ribosyl)imidazole from N(2)-formyl-N(1)-(5-phospho-D-ribosyl)glycinamide: step 1/2. In terms of biological role, part of the phosphoribosylformylglycinamidine synthase complex involved in the purines biosynthetic pathway. Catalyzes the ATP-dependent conversion of formylglycinamide ribonucleotide (FGAR) and glutamine to yield formylglycinamidine ribonucleotide (FGAM) and glutamate. The FGAM synthase complex is composed of three subunits. PurQ produces an ammonia molecule by converting glutamine to glutamate. PurL transfers the ammonia molecule to FGAR to form FGAM in an ATP-dependent manner. PurS interacts with PurQ and PurL and is thought to assist in the transfer of the ammonia molecule from PurQ to PurL. The polypeptide is Phosphoribosylformylglycinamidine synthase subunit PurL (Rhizobium leguminosarum bv. trifolii (strain WSM2304)).